The sequence spans 190 residues: Guanylate kinase (190 aa).

One can recognise a Guanylate kinase-like domain in the interval 7–186 (GKLIVFSAPS…AVDDVEAAIV (180 aa)). Position 14 to 21 (14 to 21 (APSGAGKT)) interacts with ATP.

It belongs to the guanylate kinase family.

It localises to the cytoplasm. It catalyses the reaction GMP + ATP = GDP + ADP. Its function is as follows. Essential for recycling GMP and indirectly, cGMP. This chain is Guanylate kinase, found in Chlorobium chlorochromatii (strain CaD3).